The sequence spans 214 residues: Pyridoxine/pyridoxamine 5'-phosphate oxidase (214 aa).

Substrate-binding positions include 8 to 11 and lysine 67; that span reads RKSY. Residues 62–67, 77–78, lysine 84, and glutamine 106 contribute to the FMN site; these read RVVLLK and YT. Substrate is bound by residues tyrosine 124, arginine 128, and serine 132. FMN-binding positions include 141-142 and tryptophan 186; that span reads QS. Substrate is bound at residue 192 to 194; it reads RLH. Arginine 196 is an FMN binding site.

This sequence belongs to the pyridoxamine 5'-phosphate oxidase family. In terms of assembly, homodimer. FMN is required as a cofactor.

The enzyme catalyses pyridoxamine 5'-phosphate + O2 + H2O = pyridoxal 5'-phosphate + H2O2 + NH4(+). It catalyses the reaction pyridoxine 5'-phosphate + O2 = pyridoxal 5'-phosphate + H2O2. It participates in cofactor metabolism; pyridoxal 5'-phosphate salvage; pyridoxal 5'-phosphate from pyridoxamine 5'-phosphate: step 1/1. The protein operates within cofactor metabolism; pyridoxal 5'-phosphate salvage; pyridoxal 5'-phosphate from pyridoxine 5'-phosphate: step 1/1. Functionally, catalyzes the oxidation of either pyridoxine 5'-phosphate (PNP) or pyridoxamine 5'-phosphate (PMP) into pyridoxal 5'-phosphate (PLP). This chain is Pyridoxine/pyridoxamine 5'-phosphate oxidase, found in Flavobacterium psychrophilum (strain ATCC 49511 / DSM 21280 / CIP 103535 / JIP02/86).